Here is a 36-residue protein sequence, read N- to C-terminus: Allergen Act d 3 (36 aa).

In terms of processing, N-glycosylated.

The sequence is that of Allergen Act d 3 from Actinidia deliciosa (Kiwi).